Consider the following 173-residue polypeptide: Large ribosomal subunit protein uL10 (173 aa).

Belongs to the universal ribosomal protein uL10 family. In terms of assembly, part of the ribosomal stalk of the 50S ribosomal subunit. The N-terminus interacts with L11 and the large rRNA to form the base of the stalk. The C-terminus forms an elongated spine to which L12 dimers bind in a sequential fashion forming a multimeric L10(L12)X complex.

Forms part of the ribosomal stalk, playing a central role in the interaction of the ribosome with GTP-bound translation factors. This Chlorobaculum tepidum (strain ATCC 49652 / DSM 12025 / NBRC 103806 / TLS) (Chlorobium tepidum) protein is Large ribosomal subunit protein uL10.